The following is a 325-amino-acid chain: Undecaprenyl-phosphate 4-deoxy-4-formamido-L-arabinose transferase (325 aa).

The next 2 membrane-spanning stretches (helical) occupy residues 234–254 (LLSVIGSVIALMGFAFSLLLI) and 269–289 (VFMLFAVLFIFIGAQFVGMGL).

The protein belongs to the glycosyltransferase 2 family.

It is found in the cell inner membrane. The catalysed reaction is UDP-4-deoxy-4-formamido-beta-L-arabinose + di-trans,octa-cis-undecaprenyl phosphate = 4-deoxy-4-formamido-alpha-L-arabinopyranosyl di-trans,octa-cis-undecaprenyl phosphate + UDP. Its pathway is glycolipid biosynthesis; 4-amino-4-deoxy-alpha-L-arabinose undecaprenyl phosphate biosynthesis; 4-amino-4-deoxy-alpha-L-arabinose undecaprenyl phosphate from UDP-4-deoxy-4-formamido-beta-L-arabinose and undecaprenyl phosphate: step 1/2. It functions in the pathway bacterial outer membrane biogenesis; lipopolysaccharide biosynthesis. In terms of biological role, catalyzes the transfer of 4-deoxy-4-formamido-L-arabinose from UDP to undecaprenyl phosphate. The modified arabinose is attached to lipid A and is required for resistance to polymyxin and cationic antimicrobial peptides. In Erwinia tasmaniensis (strain DSM 17950 / CFBP 7177 / CIP 109463 / NCPPB 4357 / Et1/99), this protein is Undecaprenyl-phosphate 4-deoxy-4-formamido-L-arabinose transferase.